The following is a 271-amino-acid chain: Tryptophan synthase alpha chain (271 aa).

Catalysis depends on proton acceptor residues E56 and D67.

This sequence belongs to the TrpA family. Tetramer of two alpha and two beta chains.

The catalysed reaction is (1S,2R)-1-C-(indol-3-yl)glycerol 3-phosphate + L-serine = D-glyceraldehyde 3-phosphate + L-tryptophan + H2O. The protein operates within amino-acid biosynthesis; L-tryptophan biosynthesis; L-tryptophan from chorismate: step 5/5. Functionally, the alpha subunit is responsible for the aldol cleavage of indoleglycerol phosphate to indole and glyceraldehyde 3-phosphate. This Mycolicibacterium paratuberculosis (strain ATCC BAA-968 / K-10) (Mycobacterium paratuberculosis) protein is Tryptophan synthase alpha chain.